Here is a 411-residue protein sequence, read N- to C-terminus: Nuclear receptor subfamily 2 group F member 1-A (411 aa).

The interval 1-68 (MAMVVSVWRD…AGDKGSQNSG (68 aa)) is disordered. The span at 24 to 46 (NPAAQPAREQQQAASAAPHTPQT) shows a compositional bias: low complexity. Residues 73 to 148 (HIECVVCGDK…VGMRREAVQR (76 aa)) constitute a DNA-binding region (nuclear receptor). NR C4-type zinc fingers lie at residues 76–96 (CVVCGDKSSGKHYGQFTCEGC) and 112–136 (CRANRNCPIDQHHRNQCQYCRLKKC). Residues 174 to 400 (YLSGYISLLL…TLIRDMLLSG (227 aa)) form the NR LBD domain.

Belongs to the nuclear hormone receptor family. NR2 subfamily. First expressed in 11-12 hour embryos. In the rostral brain of 13 hour embryos, expressed within the anterior half of the midbrain and the posterior part of the diencephalon. In the presumptive hindbrain, expressed in a segment-like stripe in the anterior region, resembling the presumptive rhombomere units of the hindbrain. Also detected in the intermediate mesoderm, posterior to the first somite. As somitogenesis proceeds, expression extends posteriorly and flanks the 10 most anterior somites. Expression changes extensively both in level and expansion of domains between 13 and 20 hours. In the rostral brain, expression extends to include a major part of the diencephalon and a caudal portion of the telencephalon. Within the hindbrain, strongly expressed in the two most anterior rhombomeres, and a lower but uniform expression is seen to extend throughout rhombomere 7. In 28 hour embryos, higher and more uniform expression is seen in both rostral and hindbrain areas. Also expressed in the retina of the eye.

It localises to the nucleus. Its function is as follows. Putative transcription factor that is required in photoreceptor cells precursors during eye development. This Danio rerio (Zebrafish) protein is Nuclear receptor subfamily 2 group F member 1-A (nr2f1a).